A 261-amino-acid polypeptide reads, in one-letter code: Kallikrein-1 (261 aa).

A signal peptide spans 1-18; the sequence is MWFLILFLALSLGRNDAA. The propeptide at 19–24 is activation peptide; that stretch reads PPVQSR. In terms of domain architecture, Peptidase S1 spans 25–258; sequence VVGGYNCEMN…FTPWIKEVMK (234 aa). Intrachain disulfides connect Cys-31–Cys-173, Cys-50–Cys-66, Cys-152–Cys-219, Cys-184–Cys-198, and Cys-209–Cys-234. His-65 acts as the Charge relay system in catalysis. Residue Asn-108 is glycosylated (N-linked (GlcNAc...) asparagine). The active-site Charge relay system is Asp-120. Catalysis depends on Ser-213, which acts as the Charge relay system.

It belongs to the peptidase S1 family. Kallikrein subfamily. In terms of tissue distribution, high levels in pancreas, submaxillary and parotid glands, spleen, and kidney.

The catalysed reaction is Preferential cleavage of Arg-|-Xaa bonds in small molecule substrates. Highly selective action to release kallidin (lysyl-bradykinin) from kininogen involves hydrolysis of Met-|-Xaa or Leu-|-Xaa.. The chain is Kallikrein-1 (Ngfg) from Rattus norvegicus (Rat).